The primary structure comprises 83 residues: Molybdopterin synthase sulfur carrier subunit (83 aa).

At G83 the chain carries 1-thioglycine; alternate. Glycyl adenylate; alternate is present on G83.

It belongs to the MoaD family. MOCS2A subfamily. In terms of assembly, heterotetramer; composed of 2 small (MOCS2A) and 2 large (MOCS2B) subunits. Post-translationally, C-terminal thiocarboxylation occurs in 2 steps, it is first acyl-adenylated (-COAMP) via the hesA/moeB/thiF part of MOCS3, then thiocarboxylated (-COSH) via the rhodanese domain of MOCS3.

It is found in the cytoplasm. It participates in cofactor biosynthesis; molybdopterin biosynthesis. Functionally, acts as a sulfur carrier required for molybdopterin biosynthesis. Component of the molybdopterin synthase complex that catalyzes the conversion of precursor Z into molybdopterin by mediating the incorporation of 2 sulfur atoms into precursor Z to generate a dithiolene group. In the complex, serves as sulfur donor by being thiocarboxylated (-COSH) at its C-terminus by MOCS3. After interaction with MOCS2B, the sulfur is then transferred to precursor Z to form molybdopterin. The chain is Molybdopterin synthase sulfur carrier subunit from Chlamydomonas reinhardtii (Chlamydomonas smithii).